A 160-amino-acid polypeptide reads, in one-letter code: MFGMGFFEILVVLIVAIIFLGPEKFPQAVVDIVKFFRAVKKTLNDAKDTLDKEINIEEIKKETLEYQKLFENKVESLKGVKIEELEDAKVTAENEIKSIQDLMQDYKRSLETNTIPNHLNEEVSNEEALNKEVSSDESPKEVQLTTDNNAKEHDKEKEHV.

The chain crosses the membrane as a helical span at residues 1-21 (MFGMGFFEILVVLIVAIIFLG). The tract at residues 118–160 (HLNEEVSNEEALNKEVSSDESPKEVQLTTDNNAKEHDKEKEHV) is disordered. Basic and acidic residues-rich tracts occupy residues 128–140 (ALNK…ESPK) and 149–160 (NAKEHDKEKEHV).

The protein belongs to the TatB family. In terms of assembly, the Tat system comprises two distinct complexes: a TatABC complex, containing multiple copies of TatA, TatB and TatC subunits, and a separate TatA complex, containing only TatA subunits. Substrates initially bind to the TatABC complex, which probably triggers association of the separate TatA complex to form the active translocon.

The protein localises to the cell inner membrane. Functionally, part of the twin-arginine translocation (Tat) system that transports large folded proteins containing a characteristic twin-arginine motif in their signal peptide across membranes. Together with TatC, TatB is part of a receptor directly interacting with Tat signal peptides. TatB may form an oligomeric binding site that transiently accommodates folded Tat precursor proteins before their translocation. The polypeptide is Sec-independent protein translocase protein TatB (Helicobacter pylori (strain J99 / ATCC 700824) (Campylobacter pylori J99)).